The chain runs to 1249 residues: AMB antimetabolite synthetase AmbB (1249 aa).

An adenylation region spans residues 245-633 (FEAQARRTPQ…LGRLDDQVKF (389 aa)). The interval 716 to 735 (IDRKALPRPQATGAEPQALP) is disordered. The region spanning 734 to 809 (LPSDPLEQAL…ALLELLRQAA (76 aa)) is the Carrier domain. O-(pantetheine 4'-phosphoryl)serine is present on serine 768. Positions 823-1150 (GLSLAERRLW…CVTQALRQRG (328 aa)) are condensation.

The protein belongs to the NRP synthetase family. Pantetheine 4'-phosphate is required as a cofactor.

It carries out the reaction holo-[peptidyl-carrier protein] + L-alanine + ATP = L-alanyl-[peptidyl-carrier protein] + AMP + diphosphate. In terms of biological role, involved in the biosynthesis of the antimetabolite L-2-amino-4-methoxy-trans-3-butenoic acid (AMB), a non-proteinogenic amino acid which is toxic for prokaryotes and eukaryotes. Adenylates L-alanine and loads it onto its peptidyl carrier domain via a thioester linkage to the phosphopanthetheine moiety. In addition, loads activated L-Ala in trans onto the second carrier domain of AmbE. Can also activate L-Ser, Gly and D-Ala, albeit to a lower extent. The condensation domain of AmbB probably condenses the activated L-Ala and the L-Glu loaded on AmbE to form a L-Glu-L-Ala dipeptide at the first carrier domain of AmbE. The protein is AMB antimetabolite synthetase AmbB of Pseudomonas aeruginosa (strain ATCC 15692 / DSM 22644 / CIP 104116 / JCM 14847 / LMG 12228 / 1C / PRS 101 / PAO1).